The chain runs to 821 residues: Maternal DNA replication licensing factor mcm6 (821 aa).

The segment at 159-186 (CMDCQSVVKDVEQQFRYTQPTICKNPVC) adopts a C4-type zinc-finger fold. The MCM domain maps to 347-554 (LYHNLCTSLF…TDYAIARRIV (208 aa)). 397 to 404 (GDPSTSKS) serves as a coordination point for ATP. Positions 529–532 (SRFD) match the Arginine finger motif.

Belongs to the MCM family. Component of the mcm2-7 complex (RLF-M). The complex forms a toroidal hexameric ring with the proposed subunit order mcm2-mcm6-mcm4-mcm7-mcm3-mcm5. The heterodimer of mmcm3/mcm5 interacts with mcm4, mmcm6, mcm7 and weakly with mcm2. Component of the CMG helicase complex, composed of the mcm2-7 complex, the GINS complex and cdc45.

It is found in the nucleus. Its subcellular location is the chromosome. The enzyme catalyses ATP + H2O = ADP + phosphate + H(+). In terms of biological role, acts as a component of the mcm2-7 complex (mcm complex) which is the putative replicative helicase essential for 'once per cell cycle' DNA replication initiation and elongation in eukaryotic cells. The active ATPase sites in the mcm2-7 ring are formed through the interaction surfaces of two neighboring subunits such that a critical structure of a conserved arginine finger motif is provided in trans relative to the ATP-binding site of the Walker A box of the adjacent subunit. The six ATPase active sites, however, are likely to contribute differentially to the complex helicase activity. The existence of maternal and zygotic forms of mcm3 and mcm6 suggests that specific forms of mcm2-7 complexes may be used during different stages of development. The chain is Maternal DNA replication licensing factor mcm6 from Xenopus tropicalis (Western clawed frog).